The chain runs to 147 residues: uncharacterized protein (147 aa).

The disordered stretch occupies residues 29–147 (PYGNNSVHQG…GHHHGHHHKH (119 aa)). Composition is skewed to polar residues over residues 34–45 (SVHQGQPHTDQN) and 60–73 (PQAQ…NQPS). Positions 75-92 (PFGGAGYTGPTAGTGFGN) are enriched in gly residues. A compositionally biased stretch (basic residues) spans 122–147 (DGHHKKHGRKEHDHHHGHHHGHHHKH).

This is an uncharacterized protein from Caenorhabditis elegans.